We begin with the raw amino-acid sequence, 622 residues long: Low affinity potassium transport system protein Kup (622 aa).

12 helical membrane passes run 9-29 (LPAI…TSPL), 49-69 (VFGF…IKYL), 103-123 (VIMG…TPAI), 137-157 (PQLD…LFMI), 165-185 (VGKL…GLGL), 213-233 (VSFI…ALYA), 247-267 (WFTV…ALLL), 276-296 (PFFL…AALA), 337-357 (IYIP…IVSF), 363-383 (LAAA…ILST), 396-416 (FVAL…TANL), and 419-439 (LLSG…VMTT).

It belongs to the HAK/KUP transporter (TC 2.A.72) family.

It localises to the cell inner membrane. It carries out the reaction K(+)(in) + H(+)(in) = K(+)(out) + H(+)(out). Functionally, responsible for the low-affinity transport of potassium into the cell. Likely operates as a K(+):H(+) symporter. This chain is Low affinity potassium transport system protein Kup, found in Shigella sonnei (strain Ss046).